A 91-amino-acid chain; its full sequence is Small ribosomal subunit protein bS20 (91 aa).

Residues 1 to 25 (MANSPSAKKRAKQAEKRRSHNASLR) are disordered. Residues 7–20 (AKKRAKQAEKRRSH) are compositionally biased toward basic residues.

Belongs to the bacterial ribosomal protein bS20 family.

Its function is as follows. Binds directly to 16S ribosomal RNA. The polypeptide is Small ribosomal subunit protein bS20 (Azotobacter vinelandii (strain DJ / ATCC BAA-1303)).